An 85-amino-acid chain; its full sequence is MNYLIVISFALLLMTSVESGRDAYIADSENCTYFCGSNPYCNDLCTENGAKSGYCQWAGRYGNACWCIDLPDKVPIRIPGPCRGR.

An N-terminal signal peptide occupies residues Met-1 to Ser-19. Residues Arg-21–Arg-83 form the LCN-type CS-alpha/beta domain. Disulfide bonds link Cys-31-Cys-82, Cys-35-Cys-55, Cys-41-Cys-65, and Cys-45-Cys-67.

The protein belongs to the long (4 C-C) scorpion toxin superfamily. Sodium channel inhibitor family. Alpha subfamily. Expressed by the venom gland.

It localises to the secreted. Its function is as follows. This protein markedly relaxes the rat carbachol-precontracted anococcygeus muscle. This relaxation is inhibited by the inhibitor of nitric oxide (NO) synthase, N-nitro-L-arginine methyl ester (L-NAME), suggesting that the response induced by this protein is NO-mediated. The sequence is that of Makatoxin-2 from Olivierus martensii (Manchurian scorpion).